The primary structure comprises 485 residues: Probable WRKY transcription factor 10 (485 aa).

2 disordered regions span residues 43–62 and 215–293; these read IFPQESLPRDHTDQSGQRSG and ISIE…SKTQ. Residues 216-264 show a composition bias toward acidic residues; that stretch reads SIEDSESEDGNKDDDDEDFQYEDEDEDQYDQDQDVDEDEEEEKDEDNVA. Positions 301–366 form a DNA-binding region, WRKY; sequence SDEDNPNDGY…YDGIHNHPSP (66 aa). Zn(2+)-binding residues include cysteine 332, cysteine 337, histidine 361, and histidine 363. A disordered region spans residues 358–417; it reads DGIHNHPSPPARRSNSSSRNRSAGATIPQNQNDRTSRLGRAPPTPTPPTPPPSSYTPEEM. Residues 368–380 are compositionally biased toward low complexity; the sequence is ARRSNSSSRNRSA. Residues 399 to 411 are compositionally biased toward pro residues; it reads PPTPTPPTPPPSS.

It belongs to the WRKY group I family. Interacts with IKU1. In terms of tissue distribution, expressed in male gametophytes (pollen) and in the endosperm of fertilized ovules.

It localises to the nucleus. Functionally, transcription factor. Interacts specifically with the W box (5'-(T)TGAC[CT]-3'), a frequently occurring elicitor-responsive cis-acting element. Modulates seed size by negatively regulating the cellularization of syncytial endosperm. This is Probable WRKY transcription factor 10 (WRKY10) from Arabidopsis thaliana (Mouse-ear cress).